Reading from the N-terminus, the 375-residue chain is MANMSRLNELVSEFGLVERRLGDPQALADGREYARLTRRHRELLPLVTLVREREQAEADLSGARELLQDPDMRDPDMKELAQLEVGGLQARLAEIEAELEVLLLPTDPDDGKDVILELRAGAGGAEAGLFVMDLLRMYERYAAGLNLKLNVLDAAESDLGGASKVVAEVTGDFAFRALKWERGVHRVQRVPATESQGRIHTSTATVAVLPEAEPGEVNLDLSEVRIDVFRSQGAGGQGVNTTDSAVRAVYRAGTPDEIMVICQDGRSQIKNREKALQVLTARLAERERAAREAQERQERASQVGSGDRSEKIRTYNYPQNRVTDHRLEGEDKNHPLDAVMAGGLAPVVSALARAQREEQLLAMSQEGAEDQHGAA.

Gln237 bears the N5-methylglutamine mark. Residues 289–299 (AAREAQERQER) are compositionally biased toward basic and acidic residues. Residues 289-326 (AAREAQERQERASQVGSGDRSEKIRTYNYPQNRVTDHR) are disordered.

The protein belongs to the prokaryotic/mitochondrial release factor family. In terms of processing, methylated by PrmC. Methylation increases the termination efficiency of RF1.

Its subcellular location is the cytoplasm. In terms of biological role, peptide chain release factor 1 directs the termination of translation in response to the peptide chain termination codons UAG and UAA. This Deinococcus radiodurans (strain ATCC 13939 / DSM 20539 / JCM 16871 / CCUG 27074 / LMG 4051 / NBRC 15346 / NCIMB 9279 / VKM B-1422 / R1) protein is Peptide chain release factor 1 (prfA).